A 328-amino-acid chain; its full sequence is Mitochondrial GTPase 1 (328 aa).

The CP-type G domain occupies 23 to 211 (NKTLKRLKNL…MLDTPGIMTP (189 aa)). Residues 70–73 (NKCD), 155–160 (NTGKSS), and Gly207 each bind GTP.

The protein belongs to the TRAFAC class YlqF/YawG GTPase family. MTG1 subfamily.

The protein localises to the mitochondrion inner membrane. Its function is as follows. Mitochondrial GTPase involved in assembly of the large ribosomal subunit. Plays a role in expression of the mitochondrial translational machinery. This is Mitochondrial GTPase 1 (mtg1) from Schizosaccharomyces pombe (strain 972 / ATCC 24843) (Fission yeast).